The following is a 776-amino-acid chain: Ion-translocating oxidoreductase complex subunit C (776 aa).

4Fe-4S ferredoxin-type domains lie at 368-397 and 407-436; these read MGAP…QQLY and KATA…VQYF. 8 residues coordinate [4Fe-4S] cluster: cysteine 377, cysteine 380, cysteine 383, cysteine 387, cysteine 416, cysteine 419, cysteine 422, and cysteine 426. 5 stretches are compositionally biased toward basic and acidic residues: residues 534 to 543, 597 to 611, 633 to 647, 669 to 683, and 705 to 719; these read ARARQAEKVQ, ADEK…RKAA, and ADEK…RKAT. Residues 534–754 are disordered; the sequence is ARARQAEKVQ…ENEAEDPRKA (221 aa). Residues 721–743 are compositionally biased toward low complexity; the sequence is EAAIARAKARKAAQAGERAQAAN.

It belongs to the 4Fe4S bacterial-type ferredoxin family. RnfC subfamily. The complex is composed of six subunits: RnfA, RnfB, RnfC, RnfD, RnfE and RnfG. Requires [4Fe-4S] cluster as cofactor.

Its subcellular location is the cell inner membrane. Functionally, part of a membrane-bound complex that couples electron transfer with translocation of ions across the membrane. This is Ion-translocating oxidoreductase complex subunit C from Cronobacter sakazakii (strain ATCC BAA-894) (Enterobacter sakazakii).